The chain runs to 149 residues: MLEAWQIQEIIPHRYPFLLVDRIIEIEWGQRAVGIKNVTVNEPFFVGHFPGNPVMPGVLIIEALAQVGAVALLGHPQYRDKTAFFAGIDGVRFKRPVRPGDTLRLEVQIGKVRRNIGTGTGRATVDGELAAEGEILFALLDPEAARTTR.

H48 is a catalytic residue.

This sequence belongs to the thioester dehydratase family. FabZ subfamily.

It is found in the cytoplasm. It catalyses the reaction a (3R)-hydroxyacyl-[ACP] = a (2E)-enoyl-[ACP] + H2O. Involved in unsaturated fatty acids biosynthesis. Catalyzes the dehydration of short chain beta-hydroxyacyl-ACPs and long chain saturated and unsaturated beta-hydroxyacyl-ACPs. This chain is 3-hydroxyacyl-[acyl-carrier-protein] dehydratase FabZ, found in Thermomicrobium roseum (strain ATCC 27502 / DSM 5159 / P-2).